Here is a 163-residue protein sequence, read N- to C-terminus: UPF0523 protein B (163 aa).

It belongs to the UPF0523 family.

This chain is UPF0523 protein B, found in Dictyostelium discoideum (Social amoeba).